Consider the following 733-residue polypeptide: EF-hand domain-containing family member C2 (733 aa).

3 consecutive DM10 domains span residues 61–168 (DKQV…TKIG), 212–354 (DRKV…RTKY), and 416–523 (ISNT…ERNS).

In terms of assembly, microtubule inner protein component of sperm flagellar doublet microtubules. In terms of tissue distribution, expressed in trachea multiciliated cells.

It localises to the cytoplasm. Its subcellular location is the cytoskeleton. The protein localises to the cilium axoneme. It is found in the flagellum axoneme. Microtubule inner protein (MIP) part of the dynein-decorated doublet microtubules (DMTs) in cilia axoneme, which is required for motile cilia beating. The protein is EF-hand domain-containing family member C2 (EFHC2) of Bos taurus (Bovine).